A 2235-amino-acid polypeptide reads, in one-letter code: Mediator of RNA polymerase II transcription subunit 12 (2235 aa).

Residues 16 to 35 (SAIGGASARDSGRADSSSIG) are compositionally biased toward low complexity. 6 disordered regions span residues 16–80 (SAIG…EENL), 268–293 (FPAQQTRDRSPQMLYTGSMQKNSPAS), 835–858 (SVKRSSGSVYSKMDQPEATPGCED), 1900–1959 (SSVT…SPAA), 2134–2160 (GSTAAAGTNQRNSPAISKSGTAAAQGK), and 2183–2202 (WTLLEDGTSSGLSSSNASNS). Over residues 280–293 (MLYTGSMQKNSPAS) the composition is skewed to polar residues. The segment covering 1900-1916 (SSVTNRSTTSNKQMGTA) has biased composition (polar residues). The segment covering 1917 to 1927 (SSGSEISSNKG) has biased composition (low complexity). Residues 2134-2155 (GSTAAAGTNQRNSPAISKSGTA) show a composition bias toward polar residues. A compositionally biased stretch (low complexity) spans 2191 to 2202 (SSGLSSSNASNS).

It belongs to the Mediator complex subunit 12 family. Component of the Mediator complex. Ubiquitous. Higher expression in vascular tissue, shoot apex and developing floral organs.

It localises to the nucleus. In terms of biological role, component of the Mediator complex, a coactivator involved in the regulated transcription of nearly all RNA polymerase II-dependent genes. Mediator functions as a bridge to convey information from gene-specific regulatory proteins to the basal RNA polymerase II transcription machinery. The Mediator complex, having a compact conformation in its free form, is recruited to promoters by direct interactions with regulatory proteins and serves for the assembly of a functional preinitiation complex with RNA polymerase II and the general transcription factors. Flowering regulator which suppresses FLC expression, promotes FT and TSF expression and up-regulates SOC1 and FUL mainly in an FT-dependent manner under long-day conditions. Involved in diverse developmental aspects through gene regulation and modulation of the auxin response. Acts closely together with MAB13. Involved in the regulation of embryo patterning and cotyledon organogenesis by transiently repressing a transcriptional program that interferes with this process. The chain is Mediator of RNA polymerase II transcription subunit 12 (MED12) from Arabidopsis thaliana (Mouse-ear cress).